Here is a 366-residue protein sequence, read N- to C-terminus: Quinolinate synthase (366 aa).

Iminosuccinate-binding residues include histidine 44 and serine 61. Cysteine 108 serves as a coordination point for [4Fe-4S] cluster. Iminosuccinate contacts are provided by residues 139–141 and serine 160; that span reads YIN. Cysteine 228 serves as a coordination point for [4Fe-4S] cluster. Iminosuccinate-binding positions include 254 to 256 and threonine 271; that span reads HPE. Residue cysteine 318 participates in [4Fe-4S] cluster binding.

The protein belongs to the quinolinate synthase family. Type 3 subfamily. It depends on [4Fe-4S] cluster as a cofactor.

It is found in the cytoplasm. The catalysed reaction is iminosuccinate + dihydroxyacetone phosphate = quinolinate + phosphate + 2 H2O + H(+). Its pathway is cofactor biosynthesis; NAD(+) biosynthesis; quinolinate from iminoaspartate: step 1/1. Catalyzes the condensation of iminoaspartate with dihydroxyacetone phosphate to form quinolinate. This chain is Quinolinate synthase, found in Listeria monocytogenes serotype 4b (strain F2365).